Here is a 514-residue protein sequence, read N- to C-terminus: Alanine--glyoxylate aminotransferase 2, mitochondrial (514 aa).

A mitochondrion-targeting transit peptide spans 1–41; that stretch reads MTLIWRHLLRPLCLVTPAPRILEMRPFLNLGASWTSVTKLS. N6-acetyllysine; alternate is present on K71. N6-succinyllysine; alternate is present on K71. K84 bears the N6-acetyllysine mark. At K262 the chain carries N6-acetyllysine; alternate. An N6-succinyllysine; alternate modification is found at K262. Residue K304 is modified to N6-succinyllysine. K350 is subject to N6-(pyridoxal phosphate)lysine. The residue at position 420 (K420) is an N6-acetyllysine; alternate. Residue K420 is modified to N6-succinyllysine; alternate.

This sequence belongs to the class-III pyridoxal-phosphate-dependent aminotransferase family. As to quaternary structure, homotetramer. Requires pyridoxal 5'-phosphate as cofactor.

Its subcellular location is the mitochondrion. The catalysed reaction is glyoxylate + L-alanine = glycine + pyruvate. It carries out the reaction (R)-3-amino-2-methylpropanoate + pyruvate = 2-methyl-3-oxopropanoate + L-alanine. It catalyses the reaction 3-oxopropanoate + L-alanine = beta-alanine + pyruvate. The enzyme catalyses 2-oxobutanoate + L-alanine = (2S)-2-aminobutanoate + pyruvate. The catalysed reaction is N(omega),N(omega)-dimethyl-L-arginine + pyruvate = 5-(3,3-dimethylguanidino)-2-oxopentanoate + L-alanine. It carries out the reaction N(omega),N('omega)-dimethyl-L-arginine + pyruvate = 5-(3,3'-dimethylguanidino)-2-oxopentanoate + L-alanine. It catalyses the reaction N(omega),N(omega)-dimethyl-L-arginine + glyoxylate = 5-(3,3-dimethylguanidino)-2-oxopentanoate + glycine. The enzyme catalyses N(omega),N('omega)-dimethyl-L-arginine + glyoxylate = 5-(3,3'-dimethylguanidino)-2-oxopentanoate + glycine. The catalysed reaction is N(omega)-methyl-L-arginine + pyruvate = 5-(3-methylguanidino)-2-oxopentanoate + L-alanine. It carries out the reaction N(omega)-methyl-L-arginine + glyoxylate = 5-(3-methylguanidino)-2-oxopentanoate + glycine. It catalyses the reaction L-ornithine + pyruvate = 5-amino-2-oxopentanoate + L-alanine. The enzyme catalyses L-ornithine + glyoxylate = 5-amino-2-oxopentanoate + glycine. The catalysed reaction is (2S)-2-aminobutanoate + glyoxylate = 2-oxobutanoate + glycine. It carries out the reaction N(omega),N(omega)-dimethyl-L-arginine + oxaloacetate = 5-(3,3-dimethylguanidino)-2-oxopentanoate + L-aspartate. It catalyses the reaction oxaloacetate + L-alanine = L-aspartate + pyruvate. The enzyme catalyses N(omega),N(omega)-dimethyl-L-arginine + 2-oxobutanoate = 5-(3,3-dimethylguanidino)-2-oxopentanoate + (2S)-2-aminobutanoate. The catalysed reaction is 2-oxopentanoate + N(omega),N(omega)-dimethyl-L-arginine = 5-(3,3-dimethylguanidino)-2-oxopentanoate + L-2-aminopentanoate. It carries out the reaction 2-oxohexanoate + N(omega),N(omega)-dimethyl-L-arginine = L-2-aminohexanoate + 5-(3,3-dimethylguanidino)-2-oxopentanoate. Its function is as follows. Multifunctional aminotransferase with a broad substrate specificity. Catalyzes the conversion of glyoxylate to glycine using alanine as the amino donor. Catalyzes metabolism of not L- but the D-isomer of D-beta-aminoisobutyric acid to generate 2-methyl-3-oxopropanoate and alanine. Catalyzes the transfer of the amino group from beta-alanine to pyruvate to yield L-alanine and 3-oxopropanoate. Can metabolize NG-monomethyl-L-arginine (NMMA), asymmetric NG,NG-dimethyl-L-arginine (ADMA) and symmetric NG,N'G-dimethyl-L-arginine (SDMA). ADMA is a potent inhibitor of nitric-oxide (NO) synthase, and this activity provides mechanism through which the kidney regulates blood pressure. The protein is Alanine--glyoxylate aminotransferase 2, mitochondrial (AGXT2) of Pongo abelii (Sumatran orangutan).